A 697-amino-acid polypeptide reads, in one-letter code: Elongation factor G 2 (697 aa).

The region spanning 5-280 (SKYRNIGIFA…AVVDYLPAPD (276 aa)) is the tr-type G domain. GTP-binding positions include 14-21 (AHVDAGKT), 78-82 (DTPGH), and 132-135 (NKLD).

It belongs to the TRAFAC class translation factor GTPase superfamily. Classic translation factor GTPase family. EF-G/EF-2 subfamily.

The protein localises to the cytoplasm. Functionally, catalyzes the GTP-dependent ribosomal translocation step during translation elongation. During this step, the ribosome changes from the pre-translocational (PRE) to the post-translocational (POST) state as the newly formed A-site-bound peptidyl-tRNA and P-site-bound deacylated tRNA move to the P and E sites, respectively. Catalyzes the coordinated movement of the two tRNA molecules, the mRNA and conformational changes in the ribosome. The sequence is that of Elongation factor G 2 from Shewanella sp. (strain MR-7).